A 254-amino-acid polypeptide reads, in one-letter code: MSDPRHIAIIMDGNGRWAKARGLPRSAGHRAGVEALREIVRAAGDRGLGYLTLFAFSSENWTRPSGEVSDLLGLLKLFIRRDLAELHRNNVRVNIIGERAELAADIRALLNEAESLTHRNTGLNLVIAFNYGSRDEIVRAVRSLARDVAAGLLDPSSISAELVSANLDTAGIPDPDLIIRTSGEMRLSNFLLWQAAYSEFLFLPCHWPDFRPTDLDAAYETFRQRERRFGGVEPRASADAEEEILCPSTKGAAV.

Residue aspartate 12 is part of the active site. Residue aspartate 12 coordinates Mg(2+). Substrate contacts are provided by residues 13-16 (GNGR), tryptophan 17, arginine 25, histidine 29, and 57-59 (SSE). The active-site Proton acceptor is the asparagine 60. Substrate is bound by residues tryptophan 61, arginine 63, arginine 180, and 186–188 (RLS). Glutamate 199 contacts Mg(2+).

Belongs to the UPP synthase family. Homodimer. Mg(2+) is required as a cofactor.

Catalyzes the condensation of isopentenyl diphosphate (IPP) with allylic pyrophosphates generating different type of terpenoids. The sequence is that of Isoprenyl transferase from Brucella suis biovar 1 (strain 1330).